Here is a 216-residue protein sequence, read N- to C-terminus: Probable nicotinate-nucleotide adenylyltransferase (216 aa).

The protein belongs to the NadD family.

The catalysed reaction is nicotinate beta-D-ribonucleotide + ATP + H(+) = deamido-NAD(+) + diphosphate. It participates in cofactor biosynthesis; NAD(+) biosynthesis; deamido-NAD(+) from nicotinate D-ribonucleotide: step 1/1. Catalyzes the reversible adenylation of nicotinate mononucleotide (NaMN) to nicotinic acid adenine dinucleotide (NaAD). This Desulfatibacillum aliphaticivorans protein is Probable nicotinate-nucleotide adenylyltransferase.